Consider the following 193-residue polypeptide: Phosphoheptose isomerase (193 aa).

An SIS domain is found at 37–193 (LADSFKAGGK…QLIEKEMVKA (157 aa)). 52 to 54 (NGG) lines the substrate pocket. Residues H61 and E65 each contribute to the Zn(2+) site. Substrate is bound by residues E65, 93 to 94 (ND), 119 to 121 (STS), S124, and Q172. Positions 172 and 180 each coordinate Zn(2+).

The protein belongs to the SIS family. GmhA subfamily. As to quaternary structure, homotetramer. Zn(2+) serves as cofactor.

The protein resides in the cytoplasm. The catalysed reaction is 2 D-sedoheptulose 7-phosphate = D-glycero-alpha-D-manno-heptose 7-phosphate + D-glycero-beta-D-manno-heptose 7-phosphate. The protein operates within carbohydrate biosynthesis; D-glycero-D-manno-heptose 7-phosphate biosynthesis; D-glycero-alpha-D-manno-heptose 7-phosphate and D-glycero-beta-D-manno-heptose 7-phosphate from sedoheptulose 7-phosphate: step 1/1. Functionally, catalyzes the isomerization of sedoheptulose 7-phosphate in D-glycero-D-manno-heptose 7-phosphate. In Serratia proteamaculans (strain 568), this protein is Phosphoheptose isomerase.